The following is a 173-amino-acid chain: ATP synthase subunit beta, mitochondrial (173 aa).

Belongs to the ATPase alpha/beta chains family. F-type ATPases have 2 components, CF(1) - the catalytic core - and CF(0) - the membrane proton channel. CF(1) has five subunits: alpha(3), beta(3), gamma(1), delta(1), epsilon(1). CF(0) has three main subunits: a, b and c.

It is found in the mitochondrion. The protein localises to the mitochondrion inner membrane. The enzyme catalyses ATP + H2O + 4 H(+)(in) = ADP + phosphate + 5 H(+)(out). Its function is as follows. Mitochondrial membrane ATP synthase (F(1)F(0) ATP synthase or Complex V) produces ATP from ADP in the presence of a proton gradient across the membrane which is generated by electron transport complexes of the respiratory chain. F-type ATPases consist of two structural domains, F(1) - containing the extramembraneous catalytic core and F(0) - containing the membrane proton channel, linked together by a central stalk and a peripheral stalk. During catalysis, ATP synthesis in the catalytic domain of F(1) is coupled via a rotary mechanism of the central stalk subunits to proton translocation. Subunits alpha and beta form the catalytic core in F(1). Rotation of the central stalk against the surrounding alpha(3)beta(3) subunits leads to hydrolysis of ATP in three separate catalytic sites on the beta subunits. The protein is ATP synthase subunit beta, mitochondrial (ATPB) of Actinidia deliciosa (Kiwi).